The sequence spans 317 residues: CXXC-type zinc finger protein 5 (317 aa).

Over residues 1 to 10 (MSSLGGGSQD) the composition is skewed to gly residues. Residues 1–92 (MSSLGGGSQD…SFGSSGGGGS (92 aa)) are disordered. Composition is skewed to low complexity over residues 11 to 27 (AGGS…SGSG) and 36 to 51 (STAV…VADD). The CXXC-type zinc finger occupies 251–292 (GKKKRKRCGMCAPCRRRINCEQCSSCRNRKTGHQICKFRKCE). Residues 252–257 (KKKRKR) carry the Nuclear localization signal motif. The Zn(2+) site is built by Cys-258, Cys-261, Cys-264, Cys-270, Cys-273, Cys-276, Cys-286, and Cys-291.

In terms of assembly, interacts with DVL1. Interacts with RBPJ.

It is found in the nucleus. The protein localises to the cytoplasm. Functionally, may indirectly participate in activation of the NF-kappa-B and MAPK pathways. Acts as a mediator of BMP4-mediated modulation of canonical Wnt signaling activity in neural stem cells. Required for DNA damage-induced ATM phosphorylation, p53 activation and cell cycle arrest. Involved in myelopoiesis. Binds to the oxygen responsive element of COX4I2 and represses its transcription under hypoxia conditions (4% oxygen), as well as normoxia conditions (20% oxygen). May repress COX4I2 transactivation induced by CHCHD2 and RBPJ. Binds preferentially to DNA containing cytidine-phosphate-guanosine (CpG) dinucleotides over CpH (H=A, T, and C), hemimethylated-CpG and hemimethylated-hydroxymethyl-CpG. This is CXXC-type zinc finger protein 5 (Cxxc5) from Mus musculus (Mouse).